Reading from the N-terminus, the 377-residue chain is Beta sliding clamp (377 aa).

It belongs to the beta sliding clamp family. Forms a ring-shaped head-to-tail homodimer around DNA which binds and tethers DNA polymerases and other proteins to the DNA. The DNA replisome complex has a single clamp-loading complex (3 tau and 1 each of delta, delta', psi and chi subunits) which binds 3 Pol III cores (1 core on the leading strand and 2 on the lagging strand) each with a beta sliding clamp dimer. Additional proteins in the replisome are other copies of gamma, psi and chi, Ssb, DNA helicase and RNA primase.

The protein resides in the cytoplasm. Functionally, confers DNA tethering and processivity to DNA polymerases and other proteins. Acts as a clamp, forming a ring around DNA (a reaction catalyzed by the clamp-loading complex) which diffuses in an ATP-independent manner freely and bidirectionally along dsDNA. Initially characterized for its ability to contact the catalytic subunit of DNA polymerase III (Pol III), a complex, multichain enzyme responsible for most of the replicative synthesis in bacteria; Pol III exhibits 3'-5' exonuclease proofreading activity. The beta chain is required for initiation of replication as well as for processivity of DNA replication. This chain is Beta sliding clamp (dnaN), found in Staphylococcus epidermidis (strain ATCC 35984 / DSM 28319 / BCRC 17069 / CCUG 31568 / BM 3577 / RP62A).